The chain runs to 277 residues: MELIEKHASFGGWQNVYRHYSQSLKCEMNVGVYLPPKAANEKLPVLYWLSGLTCNEQNFITKSGMQRYAAEHNIIVVAPDTSPRGSHVADADRYDLGQGAGFYLNATQAPWNEHYKMYDYIRNELPDLVMHHFPATAKKSISGHSMGGLGALVLALRNPDEYVSVSAFSPIVSPSQVPWGQQAFAAYLAENKDAWLDYDPVSLISQGQRVAEIMVDQGLSDDFYAEQLRTPNLEKICQEMNIKTLIRYHEGYDHSYYFVSSFIGEHIAYHANKLNMR.

Active-site charge relay system residues include S145, D221, and H254.

The protein belongs to the esterase D family.

It carries out the reaction S-formylglutathione + H2O = formate + glutathione + H(+). Its function is as follows. Serine hydrolase involved in the detoxification of formaldehyde. Hydrolyzes S-formylglutathione to glutathione and formate. The sequence is that of S-formylglutathione hydrolase FrmB (frmB) from Escherichia coli (strain ATCC 8739 / DSM 1576 / NBRC 3972 / NCIMB 8545 / WDCM 00012 / Crooks).